A 320-amino-acid polypeptide reads, in one-letter code: Ferrochelatase (320 aa).

2 residues coordinate Fe cation: histidine 194 and glutamate 275.

This sequence belongs to the ferrochelatase family.

Its subcellular location is the cytoplasm. The catalysed reaction is heme b + 2 H(+) = protoporphyrin IX + Fe(2+). The protein operates within porphyrin-containing compound metabolism; protoheme biosynthesis; protoheme from protoporphyrin-IX: step 1/1. Catalyzes the ferrous insertion into protoporphyrin IX. The chain is Ferrochelatase from Vibrio cholerae serotype O1 (strain ATCC 39315 / El Tor Inaba N16961).